We begin with the raw amino-acid sequence, 254 residues long: Type III pantothenate kinase (254 aa).

Residue 22 to 29 (VLGNTHVR) participates in ATP binding. Substrate-binding positions include Tyr-89 and 93 to 96 (GLDR). Asp-95 acts as the Proton acceptor in catalysis. Asp-115 is a K(+) binding site. ATP is bound at residue Thr-118. Thr-173 is a substrate binding site.

It belongs to the type III pantothenate kinase family. Homodimer. Requires NH4(+) as cofactor. It depends on K(+) as a cofactor.

Its subcellular location is the cytoplasm. The enzyme catalyses (R)-pantothenate + ATP = (R)-4'-phosphopantothenate + ADP + H(+). It participates in cofactor biosynthesis; coenzyme A biosynthesis; CoA from (R)-pantothenate: step 1/5. Functionally, catalyzes the phosphorylation of pantothenate (Pan), the first step in CoA biosynthesis. This Synechococcus sp. (strain JA-2-3B'a(2-13)) (Cyanobacteria bacterium Yellowstone B-Prime) protein is Type III pantothenate kinase.